Here is a 445-residue protein sequence, read N- to C-terminus: Argininosuccinate synthase (445 aa).

ATP is bound by residues 17-25 (AFSGGLDTS) and Ala-43. Tyr-99 provides a ligand contact to L-citrulline. ATP is bound by residues Gly-129 and Thr-131. 3 residues coordinate L-aspartate: Thr-131, Asn-135, and Asp-136. Asn-135 contributes to the L-citrulline binding site. Residue Asp-136 participates in ATP binding. L-citrulline contacts are provided by Arg-139 and Ser-192. Asp-194 contacts ATP. 3 residues coordinate L-citrulline: Thr-201, Glu-203, and Glu-280.

Belongs to the argininosuccinate synthase family. Type 2 subfamily. As to quaternary structure, homotetramer.

Its subcellular location is the cytoplasm. It catalyses the reaction L-citrulline + L-aspartate + ATP = 2-(N(omega)-L-arginino)succinate + AMP + diphosphate + H(+). Its pathway is amino-acid biosynthesis; L-arginine biosynthesis; L-arginine from L-ornithine and carbamoyl phosphate: step 2/3. The polypeptide is Argininosuccinate synthase (Burkholderia cenocepacia (strain HI2424)).